Consider the following 1783-residue polypeptide: uncharacterized protein (1783 aa).

The helical transmembrane segment at 16–36 (FFLLFGIIFVLFSIIFLETSI) threads the bilayer. Residues 105–119 (GSDSGQSNGSGDNQN) are compositionally biased toward low complexity. The interval 105–125 (GSDSGQSNGSGDNQNKTIPRK) is disordered. 8 helical membrane passes run 917-937 (VSTV…ILLI), 967-987 (VFAG…AFLL), 1010-1030 (WLSF…ISWI), 1084-1104 (LFTY…AGTI), 1660-1680 (FLLG…GISM), 1709-1729 (FIPA…GVLI), 1730-1750 (GIQA…FEFL), and 1752-1772 (YMVG…YFWI).

The protein belongs to the ABC-4 integral membrane protein family.

The protein resides in the cell membrane. This is an uncharacterized protein from Mycoplasma genitalium (strain ATCC 33530 / DSM 19775 / NCTC 10195 / G37) (Mycoplasmoides genitalium).